We begin with the raw amino-acid sequence, 359 residues long: Gap junction alpha-5 protein (359 aa).

At 1–19 the chain is on the cytoplasmic side; it reads MGDWSFLGEFLEEVHKHST. Residues 20-40 form a helical membrane-spanning segment; the sequence is VIGKVWLTVLFIFRMLVLGTA. Over 41-76 the chain is Extracellular; sequence AESSWGDEQADFLCDTMQPGCENVCYDQAFPISHIR. Residues 77-97 form a helical membrane-spanning segment; sequence YWVLQVIFVSTPSLVYLGHAV. Topologically, residues 98–165 are cytoplasmic; it reads HMVRVQEKRK…CSILIRTTME (68 aa). Residues 166–186 traverse the membrane as a helical segment; the sequence is VAFIVGQYLLYGVFLDTLHVC. Residues 187–206 are Extracellular-facing; it reads RRSPCPHPVNCYVSRPTEKN. Residues 207–227 form a helical membrane-spanning segment; sequence VFIVFMLAVAGLSLFLSLAEL. The Cytoplasmic portion of the chain corresponds to 228–359; that stretch reads YHLGWKKIRQ…SKARSDDLSV (132 aa). Disordered stretches follow at residues 285–305 and 317–359; these read SNKMASQQNTDNLSTEQVRSQ and RYAQ…DLSV. Serine 354 and serine 358 each carry phosphoserine.

The protein belongs to the connexin family. Alpha-type (group II) subfamily. A connexon is composed of a hexamer of connexins.

It localises to the cell membrane. It is found in the cell junction. The protein resides in the gap junction. One gap junction consists of a cluster of closely packed pairs of transmembrane channels, the connexons, through which materials of low MW diffuse from one cell to a neighboring cell. This chain is Gap junction alpha-5 protein (GJA5), found in Bos taurus (Bovine).